Here is a 392-residue protein sequence, read N- to C-terminus: Phosphoglycerate kinase (392 aa).

Substrate-binding positions include 21–23, arginine 36, 59–62, arginine 113, and arginine 146; these read DLN and HLGR. Residues lysine 197, glutamate 319, and 345-348 contribute to the ATP site; that span reads GGDT.

Belongs to the phosphoglycerate kinase family. Monomer.

It localises to the cytoplasm. The catalysed reaction is (2R)-3-phosphoglycerate + ATP = (2R)-3-phospho-glyceroyl phosphate + ADP. Its pathway is carbohydrate degradation; glycolysis; pyruvate from D-glyceraldehyde 3-phosphate: step 2/5. The protein is Phosphoglycerate kinase of Alkalilimnicola ehrlichii (strain ATCC BAA-1101 / DSM 17681 / MLHE-1).